Here is a 492-residue protein sequence, read N- to C-terminus: Bifunctional shikimate kinase/3-dehydroquinate synthase (492 aa).

Residues 1 to 161 form a shikimate kinase region; that stretch reads MRIFLVGMMG…TALVVLEALD (161 aa). Residue 10-15 participates in ATP binding; that stretch reads GSGKST. Residue Ser14 coordinates Mg(2+). The substrate site is built by Asp32, Arg56, and Gly78. ATP is bound at residue Arg114. Arg131 lines the substrate pocket. The interval 162-492 is 3-dehydroquinate synthase; sequence EKEISTIEKP…DPLELLEVVD (331 aa).

This sequence in the N-terminal section; belongs to the shikimate kinase family. In the C-terminal section; belongs to the sugar phosphate cyclases superfamily. Dehydroquinate synthase family. Requires Mg(2+) as cofactor. The cofactor is NAD(+). A divalent metal cation is required as a cofactor.

It is found in the cytoplasm. The enzyme catalyses 7-phospho-2-dehydro-3-deoxy-D-arabino-heptonate = 3-dehydroquinate + phosphate. It carries out the reaction shikimate + ATP = 3-phosphoshikimate + ADP + H(+). It functions in the pathway metabolic intermediate biosynthesis; chorismate biosynthesis; chorismate from D-erythrose 4-phosphate and phosphoenolpyruvate: step 2/7. The protein operates within metabolic intermediate biosynthesis; chorismate biosynthesis; chorismate from D-erythrose 4-phosphate and phosphoenolpyruvate: step 5/7. In terms of biological role, catalyzes the specific phosphorylation of the 3-hydroxyl group of shikimic acid using ATP as a cosubstrate. The sequence is that of Bifunctional shikimate kinase/3-dehydroquinate synthase (aroKB) from Thermotoga maritima (strain ATCC 43589 / DSM 3109 / JCM 10099 / NBRC 100826 / MSB8).